Consider the following 386-residue polypeptide: uncharacterized protein (386 aa).

The protein belongs to the mimivirus L17x/L18x family.

This is an uncharacterized protein from Acanthamoeba polyphaga mimivirus (APMV).